The primary structure comprises 199 residues: Potassium-transporting ATPase KdpC subunit (199 aa).

The chain crosses the membrane as a helical span at residues 7–27 (PAIVLLLALTLLTGLAYPLAM). The disordered stretch occupies residues 67–86 (HGRPSATTAADPQDSSKTVP). Residues 71–84 (SATTAADPQDSSKT) are compositionally biased toward polar residues.

It belongs to the KdpC family. As to quaternary structure, the system is composed of three essential subunits: KdpA, KdpB and KdpC.

The protein resides in the cell inner membrane. Part of the high-affinity ATP-driven potassium transport (or Kdp) system, which catalyzes the hydrolysis of ATP coupled with the electrogenic transport of potassium into the cytoplasm. This subunit acts as a catalytic chaperone that increases the ATP-binding affinity of the ATP-hydrolyzing subunit KdpB by the formation of a transient KdpB/KdpC/ATP ternary complex. The chain is Potassium-transporting ATPase KdpC subunit from Rhodopseudomonas palustris (strain BisB18).